A 548-amino-acid polypeptide reads, in one-letter code: Calcium-transporting ATPase (548 aa).

Positions 1-21 (MNFKSTVITAMCCFFSFAVLA) are cleaved as a signal peptide. Residues aspartate 37 and threonine 78 each coordinate a divalent metal cation. Threonine 78 serves as the catalytic Phosphothreonine intermediate. Substrate-binding positions include asparagine 99 and 160–162 (KDR). Residues 179–187 (DGKTGDWIT) carry the ATP-binding motif. Aspartate 305, histidine 309, aspartate 352, histidine 353, and histidine 488 together coordinate a divalent metal cation.

Mg(2+) serves as cofactor.

Its subcellular location is the cell inner membrane. The catalysed reaction is Ca(2+)(in) + ATP + H2O = Ca(2+)(out) + ADP + phosphate + H(+). Its activity is regulated as follows. Completely inhibited by vanadate(3-). Also inhibited by lanthanoid atom and phosphate. Not inhibited by N-ethylmaleimide, 1,3-dicyclohexylcarbodiimide, oligomycin, ouabain, valinomycin, nigericin, thapsigargin, cyclopiazonic acid or fluorescein isothiocyanate. Catalyzes the hydrolysis of ATP coupled with the transport of calcium. Has some hydrolysis activity also with dATP, GTP, UTP, ITP and 4-nitrophenyl phosphate as substrate. No activity with ADP, CTP, acetyl dihydrogen phosphate or AMP-PNP as substrate. This Myroides odoratus (Flavobacterium odoratum) protein is Calcium-transporting ATPase.